Reading from the N-terminus, the 753-residue chain is Inactive protein-tyrosine phosphatase egg-5 (753 aa).

2 disordered regions span residues 26-46 (TSLQ…STDN) and 77-116 (RKKV…YAAP). Residues 35–46 (NTDDSSADSTDN) are compositionally biased toward low complexity. Residues 84-94 (AQKDRRSKERL) are compositionally biased toward basic and acidic residues. Residues 408–661 (MERRFEILEN…IFVHRLVAFF (254 aa)) form the Tyrosine-protein phosphatase domain.

It belongs to the protein-tyrosine phosphatase family. Part of a complex, consisting of pseudophosphatases egg-3, egg-4, egg-5 and kinase mbk-2; this complex is required for the oocyte-to-zygote transition. Interacts (via tyrosine-protein phosphatase domain) with kinase mbk-2 (via 'Tyr-619' and 'Tyr-621'); mbk-2 tyrosine phosphorylation enhances the interaction.

The protein resides in the cytoplasm. The protein localises to the cell cortex. Its function is as follows. Inactive phosphatase which acts redundantly with egg-4 in the oocyte-to-zygote transition. Required for polarized cortical actin cytoskeleton rearrangement in the oocyte before and after fertilization. Together with egg-4, required for the cortical localization of kinase mbk-2 in maturing oocyte until the end of meiosis I. Also required for kinase mbk-2, pseudophosphatase egg-3 and chitin synthase chs-1 localization to cytoplasmic foci after fertilization. The polypeptide is Inactive protein-tyrosine phosphatase egg-5 (Caenorhabditis elegans).